The following is a 187-amino-acid chain: UPF0340 protein str1894 (187 aa).

Belongs to the UPF0340 family.

This is UPF0340 protein str1894 from Streptococcus thermophilus (strain CNRZ 1066).